We begin with the raw amino-acid sequence, 51 residues long: Ribosome biogenesis protein Nop10 (51 aa).

Belongs to the NOP10 family.

Involved in ribosome biogenesis; more specifically in 18S rRNA pseudouridylation and in cleavage of pre-rRNA. This is Ribosome biogenesis protein Nop10 from Methanococcus maripaludis (strain C7 / ATCC BAA-1331).